Consider the following 344-residue polypeptide: N-acetyl-gamma-glutamyl-phosphate reductase (344 aa).

C148 is an active-site residue.

This sequence belongs to the NAGSA dehydrogenase family. Type 1 subfamily.

Its subcellular location is the cytoplasm. The enzyme catalyses N-acetyl-L-glutamate 5-semialdehyde + phosphate + NADP(+) = N-acetyl-L-glutamyl 5-phosphate + NADPH + H(+). The protein operates within amino-acid biosynthesis; L-arginine biosynthesis; N(2)-acetyl-L-ornithine from L-glutamate: step 3/4. Catalyzes the NADPH-dependent reduction of N-acetyl-5-glutamyl phosphate to yield N-acetyl-L-glutamate 5-semialdehyde. The polypeptide is N-acetyl-gamma-glutamyl-phosphate reductase (Geobacillus thermodenitrificans (strain NG80-2)).